A 94-amino-acid chain; its full sequence is Large ribosomal subunit protein bL25 (94 aa).

This sequence belongs to the bacterial ribosomal protein bL25 family. In terms of assembly, part of the 50S ribosomal subunit; part of the 5S rRNA/L5/L18/L25 subcomplex. Contacts the 5S rRNA. Binds to the 5S rRNA independently of L5 and L18.

This is one of the proteins that binds to the 5S RNA in the ribosome where it forms part of the central protuberance. This is Large ribosomal subunit protein bL25 from Yersinia pestis bv. Antiqua (strain Antiqua).